Here is a 321-residue protein sequence, read N- to C-terminus: Transaldolase (321 aa).

The active-site Schiff-base intermediate with substrate is Lys132.

Belongs to the transaldolase family. Type 1 subfamily. Homodimer.

Its subcellular location is the cytoplasm. The catalysed reaction is D-sedoheptulose 7-phosphate + D-glyceraldehyde 3-phosphate = D-erythrose 4-phosphate + beta-D-fructose 6-phosphate. Its pathway is carbohydrate degradation; pentose phosphate pathway; D-glyceraldehyde 3-phosphate and beta-D-fructose 6-phosphate from D-ribose 5-phosphate and D-xylulose 5-phosphate (non-oxidative stage): step 2/3. Transaldolase is important for the balance of metabolites in the pentose-phosphate pathway. The polypeptide is Transaldolase (Agrobacterium fabrum (strain C58 / ATCC 33970) (Agrobacterium tumefaciens (strain C58))).